The sequence spans 344 residues: Dihydroorotate dehydrogenase (quinone) (344 aa).

Residues Ala65–Lys69 and Thr89 each bind FMN. Lys69 contacts substrate. Substrate is bound at residue Asn114–Phe118. FMN-binding residues include Asn142 and Asn175. Asn175 contacts substrate. Catalysis depends on Ser178, which acts as the Nucleophile. Residue Asn180 participates in substrate binding. 2 residues coordinate FMN: Lys220 and Thr248. Asn249–Thr250 is a substrate binding site. Residues Gly271, Gly300, and Tyr321–Thr322 contribute to the FMN site.

It belongs to the dihydroorotate dehydrogenase family. Type 2 subfamily. In terms of assembly, monomer. The cofactor is FMN.

It localises to the cell membrane. It catalyses the reaction (S)-dihydroorotate + a quinone = orotate + a quinol. It participates in pyrimidine metabolism; UMP biosynthesis via de novo pathway; orotate from (S)-dihydroorotate (quinone route): step 1/1. In terms of biological role, catalyzes the conversion of dihydroorotate to orotate with quinone as electron acceptor. In Paraburkholderia phymatum (strain DSM 17167 / CIP 108236 / LMG 21445 / STM815) (Burkholderia phymatum), this protein is Dihydroorotate dehydrogenase (quinone).